A 572-amino-acid chain; its full sequence is MTDVERMVLRPNHEGEMCPVCGDRVSGYHYGLLTCESCKGFFKRTVQNKKQYQCSAEANCHVDRTCRKRCPSCRFQKCLTMGMKMEAVRADRMRGGRNKFGSFYKKDRAHRMQRNAMRVSTVQVPAVLGAQSQAQTFYQPPEHQVSSSTTDQNNQINYFDQTKIKTEYIKTEYDAHLQSPTLSSSTNQQLSVSDFIMRPGYLVDPQDSLAVLLGSTIDDPLLRHTFPAAYQLNEVKQEPFDYSEQFIHHSLHDYPTYTSNTTNYATMMPMTTVSSTQSLVTSTSSTTTGRMTEASSTSPILPLCPAPTEKTVDHFYNSSIAEMCKTLPDDAQIARIFTSVKGTSKPEKHAFSIQVAEENLKDIVIWAKNDQLFSKLSLDDQMILLQTSWTTVHIVDITNAMVHGNLLSQYKMSNGDEVPVGLVALLGNQTFVSSWNDVVIRLRNMGFTNFDYCAFRFLALFDQSMDSFPAVSTARSRVLQSWREVRCTTAFLEIFEQIRRLAYDSLRYLWNLHSNCPTNWEQFFPEASLVLEMIRTTVNRSASSSVTAITQVPAIQLPTPQATYTAVPYMAS.

The nuclear receptor DNA-binding region spans 15 to 90 (GEMCPVCGDR…MGMKMEAVRA (76 aa)). NR C4-type zinc fingers lie at residues 18–38 (CPVC…CESC) and 54–78 (CSAE…FQKC). The 261-residue stretch at 307-567 (PTEKTVDHFY…PTPQATYTAV (261 aa)) folds into the NR LBD domain.

It belongs to the nuclear hormone receptor family. As to quaternary structure, interacts with lin-39. Interacts with nob-1. In terms of tissue distribution, expressed in the epidermis, the developing somatic gonad, and a subset of other epithelial cells.

It is found in the nucleus. In terms of biological role, orphan nuclear receptor and probable transcription activator, required during development. Plays a role in male tail tip morphogenesis regulating the expression of the transcription factor dmd-3 in a negative feedback loop. Regulates vulval precursor cell (VPC) differentiation, in concert with homeobox protein lin-39. Involved in promoting embryogenesis, in concert with homeobox protein nob-1. May play a role in modulation of lifespan and immunity. The chain is Nuclear hormone receptor family member nhr-25 from Caenorhabditis elegans.